The chain runs to 390 residues: Acid protease (390 aa).

The first 18 residues, 1–18 (MLFSKSLLLSVLASLSFA), serve as a signal peptide directing secretion. The Peptidase A1 domain occupies 75–386 (YLTTIEIGTP…DIDNSQVGIA (312 aa)). Residues D93 and D282 contribute to the active site.

The protein belongs to the peptidase A1 family.

The sequence is that of Acid protease (PEP1) from Saccharomycopsis fibuligera (Yeast).